The primary structure comprises 131 residues: MSWQSYVDDHLMCEVEGNHLTHAAIFGQDGSVWAQSSAFPQLKPAEIAGINKDFEEAGHLAPTGLFLGGEKYMVVQGEAGAVIRGKKGPGGVTIKKTTQALVFGIYDEPMTGGQCNLVVERLGDYLIESGL.

Belongs to the profilin family. In terms of assembly, occurs in many kinds of cells as a complex with monomeric actin in a 1:1 ratio. Expressed in vascular bundles of roots, hypocotyls, cotyledons, leaves, sepals, petals, stamen filaments and stalks of developing seeds. Expressed in leaf epidermal cells, trichomes and stem epidermal cells. Detected in phloem exudates (at protein level).

The protein resides in the cytoplasm. Its subcellular location is the cytoskeleton. The protein localises to the endoplasmic reticulum. It is found in the cytosol. It localises to the nucleus. Its function is as follows. Binds to actin monomers and regulates the organization of the actin cytoskeleton. At high concentrations, profilin prevents the polymerization of actin, whereas it enhances it at low concentrations. At low concentrations, associates with the poly-proline motif of formins to enhance actin filament elongation rate. Binds G-actin and poly-L-proline with low affinity in vitro. Binds ACT1, ACT7 and ACT11 and inhibits actin polymerization. May be involved in the cross-talk between vesicular trafficking and the actin cytoskeleton. Inhibits cell growth of various pathogenic fungal strains. May play a role as antifungal proteins in the defense system against fungal pathogen attacks. The chain is Profilin-2 from Arabidopsis thaliana (Mouse-ear cress).